Reading from the N-terminus, the 137-residue chain is Large ribosomal subunit protein uL13 (137 aa).

Belongs to the universal ribosomal protein uL13 family. Part of the 50S ribosomal subunit.

In terms of biological role, this protein is one of the early assembly proteins of the 50S ribosomal subunit, although it is not seen to bind rRNA by itself. It is important during the early stages of 50S assembly. The protein is Large ribosomal subunit protein uL13 of Methanococcus maripaludis (strain DSM 14266 / JCM 13030 / NBRC 101832 / S2 / LL).